The sequence spans 182 residues: MGLLSILRKLKSAPDQEVRILLLGLDNAGKTTLLKQLASEDISHITPTQGFNIKSVQSQGFKLNVWDIGGQRKIRPYWRSYFENTDILIYVIDSADRKRFEETGQELTELLEEEKLSCVPVLIFANKQDLLTAAPASEIAEGLNLHTIRDRVWQIQSCSALTGEGVQDGMNWVCKNVNAKKK.

Residue G2 is the site of N-myristoyl glycine attachment. Phosphoserine is present on S5. GTP is bound by residues 24-31, T48, 67-71, G70, 126-129, and 159-161; these read GLDNAGKT, DIGGQ, NKQD, and SAL. Mg(2+) is bound by residues T31 and T48.

This sequence belongs to the small GTPase superfamily. Arf family. In terms of assembly, found in a complex with ARL3, RP2 and UNC119 (or UNC119B); RP2 induces hydrolysis of GTP ARL3 in the complex, leading to the release of UNC119 (or UNC119B). Interacts with RP2; interaction is direct and stimulated with the activated GTP-bound form of ARL3. Interacts with SYS1. Interacts with ARL2BP; the GTP-bound form interacts with ARL2BP. Microtubule-associated protein. Does not interact with TBCC. Interacts with RP2. Interacts with PDE6D; the interaction occurs specifically with the GTP-bound form of ARL3. Interacts with GGA1; the interaction recruits PKD1:PKD2 complex to trans-Golgi network and is required for ciliary targeting of PKD1:PKD2 complex. Interacts with DNAAF9.

The protein resides in the golgi apparatus membrane. It localises to the cytoplasm. It is found in the cytoskeleton. Its subcellular location is the spindle. The protein localises to the nucleus. The protein resides in the microtubule organizing center. It localises to the centrosome. It is found in the cell projection. Its subcellular location is the cilium. Functionally, small GTP-binding protein which cycles between an inactive GDP-bound and an active GTP-bound form, and the rate of cycling is regulated by guanine nucleotide exchange factors (GEF) and GTPase-activating proteins (GAP). Required for normal cytokinesis and cilia signaling. Required for targeting proteins to the cilium, including myristoylated NPHP3 and prenylated INPP5E. Targets NPHP3 to the ciliary membrane by releasing myristoylated NPHP3 from UNC119B cargo adapter into the cilium. Requires assistance from GTPase-activating proteins (GAPs) like RP2 and PDE6D, in order to cycle between inactive GDP-bound and active GTP-bound forms. Required for PKD1:PKD2 complex targeting from the trans-Golgi network to the cilium. The polypeptide is ADP-ribosylation factor-like protein 3 (Mus musculus (Mouse)).